The sequence spans 659 residues: Pentatricopeptide repeat-containing protein At3g48810 (659 aa).

PPR repeat units follow at residues 75–109, 110–144, 145–179, 180–214, 215–243, 245–279, 280–314, 315–350, 351–385, 386–420, 421–455, 456–490, 492–526, 527–561, 562–598, and 599–633; these read TPLTFEVMIRKLAMDGQVDSVQYLLQQMKLQGFHC, SEDLFISVISVYRQVGLAERAVEMFYRIKEFGCDP, SVKIYNHVLDTLLGENRIQMIYMVYRDMKRDGFEP, NVFTYNVLLKALCKNNKVDGAKKLLVEMSNKGCCP, DAVSYTTVISSMCEVGLVKEGRELAERFE, VVSVYNALINGLCKEHDYKGAFELMREMVEKGISP, NVISYSTLINVLCNSGQIELAFSFLTQMLKRGCHP, NIYTLSSLVKGCFLRGTTFDALDLWNQMIRGFGLQP, NVVAYNTLVQGFCSHGNIVKAVSVFSHMEEIGCSP, NIRTYGSLINGFAKRGSLDGAVYIWNKMLTSGCCP, NVVVYTNMVEALCRHSKFKEAESLIEIMSKENCAP, SVPTFNAFIKGLCDAGRLDWAEKVFRQMEQQHRCP, NIVTYNELLDGLAKANRIEEAYGLTREIFMRGVEW, SSSTYNTLLHGSCNAGLPGIALQLVGKMMVDGKSP, DEITMNMIILAYCKQGKAERAAQMLDLVSCGRRKWRP, and DVISYTNVIWGLCRSNCREDGVILLERMISAGIVP.

This sequence belongs to the PPR family. P subfamily.

The protein is Pentatricopeptide repeat-containing protein At3g48810 of Arabidopsis thaliana (Mouse-ear cress).